We begin with the raw amino-acid sequence, 282 residues long: 3-oxoadipate CoA-transferase subunit A (282 aa).

The protein belongs to the 3-oxoacid CoA-transferase subunit A family. In terms of assembly, heterotetramer composed of 2 A and 2 B subunits.

The enzyme catalyses 3-oxoadipate + succinyl-CoA = 3-oxoadipyl-CoA + succinate. It participates in aromatic compound metabolism; beta-ketoadipate pathway; acetyl-CoA and succinyl-CoA from 3-oxoadipate: step 1/2. Its function is as follows. Catalyzes the CoA transfer from succinate to 3-oxoadipate (beta-ketoadipate). This chain is 3-oxoadipate CoA-transferase subunit A (catI), found in Pseudomonas knackmussii (strain DSM 6978 / CCUG 54928 / LMG 23759 / B13).